Here is a 312-residue protein sequence, read N- to C-terminus: Malate dehydrogenase (312 aa).

NAD(+) contacts are provided by residues 7–13 (GAAGGIG) and aspartate 34. Substrate contacts are provided by arginine 81 and arginine 87. Residues asparagine 94 and 117-119 (ITN) each bind NAD(+). Asparagine 119 and arginine 153 together coordinate substrate. Histidine 177 (proton acceptor) is an active-site residue. Methionine 227 is an NAD(+) binding site.

The protein belongs to the LDH/MDH superfamily. MDH type 1 family. Homodimer.

It catalyses the reaction (S)-malate + NAD(+) = oxaloacetate + NADH + H(+). Its function is as follows. Catalyzes the reversible oxidation of malate to oxaloacetate. This chain is Malate dehydrogenase, found in Escherichia fergusonii (strain ATCC 35469 / DSM 13698 / CCUG 18766 / IAM 14443 / JCM 21226 / LMG 7866 / NBRC 102419 / NCTC 12128 / CDC 0568-73).